Consider the following 72-residue polypeptide: Translation initiation factor IF-1 (72 aa).

Residues 1 to 72 (MAGNDVIEIE…TKGRITYRHK (72 aa)) enclose the S1-like domain.

This sequence belongs to the IF-1 family. As to quaternary structure, component of the 30S ribosomal translation pre-initiation complex which assembles on the 30S ribosome in the order IF-2 and IF-3, IF-1 and N-formylmethionyl-tRNA(fMet); mRNA recruitment can occur at any time during PIC assembly.

The protein localises to the cytoplasm. In terms of biological role, one of the essential components for the initiation of protein synthesis. Stabilizes the binding of IF-2 and IF-3 on the 30S subunit to which N-formylmethionyl-tRNA(fMet) subsequently binds. Helps modulate mRNA selection, yielding the 30S pre-initiation complex (PIC). Upon addition of the 50S ribosomal subunit IF-1, IF-2 and IF-3 are released leaving the mature 70S translation initiation complex. This is Translation initiation factor IF-1 from Oenococcus oeni (strain ATCC BAA-331 / PSU-1).